Here is a 204-residue protein sequence, read N- to C-terminus: Holliday junction branch migration complex subunit RuvA (204 aa).

Residues 1–64 (MIGKLKGTID…EDQLKLFGFM (64 aa)) are domain I. A domain II region spans residues 65–143 (TALEREWFNL…AYAGEAINIA (79 aa)). The tract at residues 144–151 (LKRELGEG) is flexible linker. Residues 152–204 (VAAAPVADAVSALTNLGYSRDQAANAVAAAMKTAGEGADSAKLIRLGLKELAR) are domain III.

The protein belongs to the RuvA family. Homotetramer. Forms an RuvA(8)-RuvB(12)-Holliday junction (HJ) complex. HJ DNA is sandwiched between 2 RuvA tetramers; dsDNA enters through RuvA and exits via RuvB. An RuvB hexamer assembles on each DNA strand where it exits the tetramer. Each RuvB hexamer is contacted by two RuvA subunits (via domain III) on 2 adjacent RuvB subunits; this complex drives branch migration. In the full resolvosome a probable DNA-RuvA(4)-RuvB(12)-RuvC(2) complex forms which resolves the HJ.

It localises to the cytoplasm. In terms of biological role, the RuvA-RuvB-RuvC complex processes Holliday junction (HJ) DNA during genetic recombination and DNA repair, while the RuvA-RuvB complex plays an important role in the rescue of blocked DNA replication forks via replication fork reversal (RFR). RuvA specifically binds to HJ cruciform DNA, conferring on it an open structure. The RuvB hexamer acts as an ATP-dependent pump, pulling dsDNA into and through the RuvAB complex. HJ branch migration allows RuvC to scan DNA until it finds its consensus sequence, where it cleaves and resolves the cruciform DNA. This is Holliday junction branch migration complex subunit RuvA from Rhizobium etli (strain ATCC 51251 / DSM 11541 / JCM 21823 / NBRC 15573 / CFN 42).